The primary structure comprises 127 residues: Glycine cleavage system H protein (127 aa).

One can recognise a Lipoyl-binding domain in the interval 24 to 106; that stretch reads TVTVGITDHA…FEGAWIAKIK (83 aa). At Lys65 the chain carries N6-lipoyllysine.

It belongs to the GcvH family. In terms of assembly, the glycine cleavage system is composed of four proteins: P, T, L and H. (R)-lipoate serves as cofactor.

The glycine cleavage system catalyzes the degradation of glycine. The H protein shuttles the methylamine group of glycine from the P protein to the T protein. This Marinomonas sp. (strain MWYL1) protein is Glycine cleavage system H protein.